A 164-amino-acid polypeptide reads, in one-letter code: Ion-translocating oxidoreductase complex subunit G (164 aa).

Thr125 is subject to FMN phosphoryl threonine.

This sequence belongs to the RnfG family. In terms of assembly, the complex is composed of six subunits: RnfA, RnfB, RnfC, RnfD, RnfE and RnfG. It depends on FMN as a cofactor.

Its function is as follows. Part of a membrane-bound complex that couples electron transfer with translocation of ions across the membrane. This Buchnera aphidicola subsp. Acyrthosiphon pisum (strain APS) (Acyrthosiphon pisum symbiotic bacterium) protein is Ion-translocating oxidoreductase complex subunit G.